Reading from the N-terminus, the 276-residue chain is Formamidopyrimidine-DNA glycosylase (276 aa).

The active-site Schiff-base intermediate with DNA is the Pro-2. Glu-3 acts as the Proton donor in catalysis. Lys-59 functions as the Proton donor; for beta-elimination activity in the catalytic mechanism. His-92, Arg-111, and Lys-155 together coordinate DNA. The FPG-type zinc-finger motif lies at 239 to 273 (AVYGQTGAPCPRCGTAIEKIKVGGRGTHFCPTCQQ). Arg-263 functions as the Proton donor; for delta-elimination activity in the catalytic mechanism.

Belongs to the FPG family. Monomer. It depends on Zn(2+) as a cofactor.

It carries out the reaction Hydrolysis of DNA containing ring-opened 7-methylguanine residues, releasing 2,6-diamino-4-hydroxy-5-(N-methyl)formamidopyrimidine.. It catalyses the reaction 2'-deoxyribonucleotide-(2'-deoxyribose 5'-phosphate)-2'-deoxyribonucleotide-DNA = a 3'-end 2'-deoxyribonucleotide-(2,3-dehydro-2,3-deoxyribose 5'-phosphate)-DNA + a 5'-end 5'-phospho-2'-deoxyribonucleoside-DNA + H(+). Its function is as follows. Involved in base excision repair of DNA damaged by oxidation or by mutagenic agents. Acts as a DNA glycosylase that recognizes and removes damaged bases. Has a preference for oxidized purines, such as 7,8-dihydro-8-oxoguanine (8-oxoG). Has AP (apurinic/apyrimidinic) lyase activity and introduces nicks in the DNA strand. Cleaves the DNA backbone by beta-delta elimination to generate a single-strand break at the site of the removed base with both 3'- and 5'-phosphates. The sequence is that of Formamidopyrimidine-DNA glycosylase from Exiguobacterium sibiricum (strain DSM 17290 / CCUG 55495 / CIP 109462 / JCM 13490 / 255-15).